The sequence spans 226 residues: 7-cyano-7-deazaguanine synthase (226 aa).

An ATP-binding site is contributed by 12–22 (LSGGLDSATVV). 4 residues coordinate Zn(2+): Cys191, Cys201, Cys204, and Cys207.

This sequence belongs to the QueC family. It depends on Zn(2+) as a cofactor.

The enzyme catalyses 7-carboxy-7-deazaguanine + NH4(+) + ATP = 7-cyano-7-deazaguanine + ADP + phosphate + H2O + H(+). It participates in purine metabolism; 7-cyano-7-deazaguanine biosynthesis. In terms of biological role, catalyzes the ATP-dependent conversion of 7-carboxy-7-deazaguanine (CDG) to 7-cyano-7-deazaguanine (preQ(0)). The sequence is that of 7-cyano-7-deazaguanine synthase from Pseudomonas syringae pv. tomato (strain ATCC BAA-871 / DC3000).